Consider the following 145-residue polypeptide: 3-hydroxyacyl-[acyl-carrier-protein] dehydratase FabZ (145 aa).

Residue histidine 48 is part of the active site.

It belongs to the thioester dehydratase family. FabZ subfamily.

Its subcellular location is the cytoplasm. The enzyme catalyses a (3R)-hydroxyacyl-[ACP] = a (2E)-enoyl-[ACP] + H2O. In terms of biological role, involved in unsaturated fatty acids biosynthesis. Catalyzes the dehydration of short chain beta-hydroxyacyl-ACPs and long chain saturated and unsaturated beta-hydroxyacyl-ACPs. The chain is 3-hydroxyacyl-[acyl-carrier-protein] dehydratase FabZ from Stutzerimonas stutzeri (strain A1501) (Pseudomonas stutzeri).